Consider the following 383-residue polypeptide: Galactokinase (383 aa).

Residue 34 to 37 (EHTD) coordinates substrate. Residue 124 to 130 (GAGLSSS) coordinates ATP. Mg(2+)-binding residues include Ser-130 and Glu-162. The Proton acceptor role is filled by Asp-174. Tyr-223 is a substrate binding site.

It belongs to the GHMP kinase family. GalK subfamily.

The protein resides in the cytoplasm. The enzyme catalyses alpha-D-galactose + ATP = alpha-D-galactose 1-phosphate + ADP + H(+). It participates in carbohydrate metabolism; galactose metabolism. Catalyzes the transfer of the gamma-phosphate of ATP to D-galactose to form alpha-D-galactose-1-phosphate (Gal-1-P). In Serratia proteamaculans (strain 568), this protein is Galactokinase.